The chain runs to 248 residues: MAKQTRRVLFKISGEALSKDSSNRIDEMRLSRLVSELRAVRNNDIEIALVIGGGNILRGLAEQKELQINRVSADQMGMLATLINGMAVADALKAEDIPCLLTSTLSCPQLADLYTPQKSIEALDQGKILICTTGAGSPYLTTDTGAALRACELNVDVLIKATMHVDGVYDKDPRLFPDAVKYDFVSYKDFLSNQLGVMDASAISLCMDSHIPIRVFSFLQHSLEKALFDPTIGTLVSEDVNHVCSPRH.

11 to 14 (KISG) lines the ATP pocket. Glycine 53 lines the UMP pocket. ATP contacts are provided by glycine 54 and arginine 58. Residues aspartate 74 and 135-142 (AGSPYLTT) each bind UMP. Positions 162, 169, and 172 each coordinate ATP.

This sequence belongs to the UMP kinase family. As to quaternary structure, homohexamer.

The protein localises to the cytoplasm. The enzyme catalyses UMP + ATP = UDP + ADP. It participates in pyrimidine metabolism; CTP biosynthesis via de novo pathway; UDP from UMP (UMPK route): step 1/1. Inhibited by UTP. Its function is as follows. Catalyzes the reversible phosphorylation of UMP to UDP. The chain is Uridylate kinase from Chlamydia pneumoniae (Chlamydophila pneumoniae).